A 504-amino-acid polypeptide reads, in one-letter code: UDP-N-acetylmuramoylalanine--D-glutamate ligase (504 aa).

ATP is bound at residue 129–135 (GTNGKTT).

This sequence belongs to the MurCDEF family.

The protein localises to the cytoplasm. The enzyme catalyses UDP-N-acetyl-alpha-D-muramoyl-L-alanine + D-glutamate + ATP = UDP-N-acetyl-alpha-D-muramoyl-L-alanyl-D-glutamate + ADP + phosphate + H(+). The protein operates within cell wall biogenesis; peptidoglycan biosynthesis. Its function is as follows. Cell wall formation. Catalyzes the addition of glutamate to the nucleotide precursor UDP-N-acetylmuramoyl-L-alanine (UMA). The polypeptide is UDP-N-acetylmuramoylalanine--D-glutamate ligase (Burkholderia pseudomallei (strain 668)).